A 432-amino-acid polypeptide reads, in one-letter code: Enolase (432 aa).

The disordered stretch occupies residues 41–64 (QVPSGASTGSFEAHELRDGDPKRY). The segment covering 52 to 64 (EAHELRDGDPKRY) has biased composition (basic and acidic residues). Glutamine 168 is a binding site for (2R)-2-phosphoglycerate. Glutamate 211 serves as the catalytic Proton donor. Residues aspartate 248, glutamate 289, and aspartate 316 each contribute to the Mg(2+) site. (2R)-2-phosphoglycerate is bound by residues lysine 341, arginine 370, serine 371, and lysine 392. Lysine 341 (proton acceptor) is an active-site residue.

This sequence belongs to the enolase family. The cofactor is Mg(2+).

It localises to the cytoplasm. The protein resides in the secreted. Its subcellular location is the cell surface. The enzyme catalyses (2R)-2-phosphoglycerate = phosphoenolpyruvate + H2O. It participates in carbohydrate degradation; glycolysis; pyruvate from D-glyceraldehyde 3-phosphate: step 4/5. Catalyzes the reversible conversion of 2-phosphoglycerate (2-PG) into phosphoenolpyruvate (PEP). It is essential for the degradation of carbohydrates via glycolysis. This chain is Enolase, found in Synechocystis sp. (strain ATCC 27184 / PCC 6803 / Kazusa).